The chain runs to 124 residues: Small ribosomal subunit protein uS12 (124 aa).

Residues 1-22 (MATVNQLVRKPRQKPDAKSNVA) are disordered. Asp-89 is subject to 3-methylthioaspartic acid.

This sequence belongs to the universal ribosomal protein uS12 family. Part of the 30S ribosomal subunit. Contacts proteins S8 and S17. May interact with IF1 in the 30S initiation complex.

With S4 and S5 plays an important role in translational accuracy. Functionally, interacts with and stabilizes bases of the 16S rRNA that are involved in tRNA selection in the A site and with the mRNA backbone. Located at the interface of the 30S and 50S subunits, it traverses the body of the 30S subunit contacting proteins on the other side and probably holding the rRNA structure together. The combined cluster of proteins S8, S12 and S17 appears to hold together the shoulder and platform of the 30S subunit. This Pseudoalteromonas atlantica (strain T6c / ATCC BAA-1087) protein is Small ribosomal subunit protein uS12.